A 60-amino-acid polypeptide reads, in one-letter code: Cytotoxin 8 (60 aa).

4 disulfide bridges follow: cysteine 3/cysteine 21, cysteine 14/cysteine 38, cysteine 42/cysteine 53, and cysteine 54/cysteine 59.

It belongs to the three-finger toxin family. Short-chain subfamily. Type IA cytotoxin sub-subfamily. In terms of assembly, monomer in solution; Homodimer and oligomer in the presence of negatively charged lipids forming a pore with a size ranging between 20 and 30 Angstroms. In terms of tissue distribution, expressed by the venom gland.

The protein resides in the secreted. Its subcellular location is the target cell membrane. Its function is as follows. Shows cytolytic activity on many different cells by forming pore in lipid membranes. In vivo, increases heart rate or kills the animal by cardiac arrest. In addition, it binds to heparin with high affinity, interacts with Kv channel-interacting protein 1 (KCNIP1) in a calcium-independent manner, and binds to integrin alpha-V/beta-3 (ITGAV/ITGB3) with moderate affinity. Has hemolytic activity towards human erythrocytes (EC(50)=0.074 uM) and cytolytic activity towards various cell lines. In Naja naja (Indian cobra), this protein is Cytotoxin 8.